Consider the following 472-residue polypeptide: UDP-glucosyltransferase 103 (472 aa).

Residue His-15 is the Proton acceptor of the active site. His-15 contributes to the an anthocyanidin binding site. The active-site Charge relay is the Asp-117. UDP-alpha-D-glucose-binding residues include Ala-344, Gln-346, His-361, Trp-364, Asn-365, Ser-366, and Glu-369. Residue Gly-384 coordinates an anthocyanidin. Glu-385 and Gln-386 together coordinate UDP-alpha-D-glucose.

The protein belongs to the UDP-glycosyltransferase family.

The enzyme catalyses (20S)-ginsenoside F1 + UDP-alpha-D-glucose = (20S)-ginsenoside Rg1 + UDP + H(+). Its pathway is secondary metabolite biosynthesis; terpenoid biosynthesis. In terms of biological role, probable component of the triterpene saponins (e.g. ginsenosides) biosynthetic pathway. No detectable activity toward protopanaxatriol (PPT). The chain is UDP-glucosyltransferase 103 from Panax ginseng (Korean ginseng).